Here is a 311-residue protein sequence, read N- to C-terminus: Thioredoxin reductase (311 aa).

33-43 (EGFFSGISGGQ) lines the FAD pocket. A disulfide bridge connects residues Cys138 and Cys141. An FAD-binding site is contributed by 283 to 292 (DVQDKYYRQA).

Belongs to the class-II pyridine nucleotide-disulfide oxidoreductase family. Homodimer. FAD serves as cofactor.

The protein localises to the cytoplasm. The catalysed reaction is [thioredoxin]-dithiol + NADP(+) = [thioredoxin]-disulfide + NADPH + H(+). This chain is Thioredoxin reductase (trxB), found in Chlamydia pneumoniae (Chlamydophila pneumoniae).